Here is a 412-residue protein sequence, read N- to C-terminus: D-nopaline dehydrogenase (412 aa).

Belongs to the lysopine/nopaline/octopine/opine/vitopine dehydrogenases family. In terms of assembly, homotetramer.

The enzyme catalyses D-nopaline + NADP(+) + H2O = L-arginine + 2-oxoglutarate + NADPH + H(+). This Agrobacterium vitis (Rhizobium vitis) protein is D-nopaline dehydrogenase (nos).